A 259-amino-acid polypeptide reads, in one-letter code: 4-hydroxy-tetrahydrodipicolinate reductase (259 aa).

NAD(+) is bound by residues 9–14 (GAGGRM) and E35. R36 serves as a coordination point for NADP(+). NAD(+) contacts are provided by residues 92-94 (GTT) and 116-119 (APNM). H149 (proton donor/acceptor) is an active-site residue. H150 provides a ligand contact to (S)-2,3,4,5-tetrahydrodipicolinate. K153 serves as the catalytic Proton donor. 159-160 (GT) is a (S)-2,3,4,5-tetrahydrodipicolinate binding site.

It belongs to the DapB family.

It localises to the cytoplasm. The enzyme catalyses (S)-2,3,4,5-tetrahydrodipicolinate + NAD(+) + H2O = (2S,4S)-4-hydroxy-2,3,4,5-tetrahydrodipicolinate + NADH + H(+). The catalysed reaction is (S)-2,3,4,5-tetrahydrodipicolinate + NADP(+) + H2O = (2S,4S)-4-hydroxy-2,3,4,5-tetrahydrodipicolinate + NADPH + H(+). It participates in amino-acid biosynthesis; L-lysine biosynthesis via DAP pathway; (S)-tetrahydrodipicolinate from L-aspartate: step 4/4. Its function is as follows. Catalyzes the conversion of 4-hydroxy-tetrahydrodipicolinate (HTPA) to tetrahydrodipicolinate. The chain is 4-hydroxy-tetrahydrodipicolinate reductase from Nitratidesulfovibrio vulgaris (strain DP4) (Desulfovibrio vulgaris).